The chain runs to 164 residues: Phosphopantetheine adenylyltransferase (164 aa).

S9 provides a ligand contact to substrate. Residues 9–10 (SF) and H17 each bind ATP. Positions 41, 73, and 87 each coordinate substrate. Residues 88 to 90 (GLR), E98, and 123 to 129 (YSYISSS) contribute to the ATP site.

It belongs to the bacterial CoaD family. Homohexamer. The cofactor is Mg(2+).

The protein localises to the cytoplasm. The catalysed reaction is (R)-4'-phosphopantetheine + ATP + H(+) = 3'-dephospho-CoA + diphosphate. It participates in cofactor biosynthesis; coenzyme A biosynthesis; CoA from (R)-pantothenate: step 4/5. Reversibly transfers an adenylyl group from ATP to 4'-phosphopantetheine, yielding dephospho-CoA (dPCoA) and pyrophosphate. The chain is Phosphopantetheine adenylyltransferase from Clostridium perfringens (strain ATCC 13124 / DSM 756 / JCM 1290 / NCIMB 6125 / NCTC 8237 / Type A).